The primary structure comprises 175 residues: NADH dehydrogenase [ubiquinone] 1 alpha subcomplex assembly factor 4 (175 aa).

G2 is lipidated: N-myristoyl glycine. S35 carries the phosphoserine modification.

It belongs to the NDUFAF4 family. Binds calmodulin. Interacts with NDUFAF3. As to quaternary structure, (Microbial infection) Interacts with the vesicular stomatitis virus matrix protein/M; the interaction inhibits viral propagation. Phosphorylated on serine. Prolactin stimulate serine phosphorylation.

It localises to the mitochondrion. The protein localises to the membrane. Functionally, involved in the assembly of mitochondrial NADH:ubiquinone oxidoreductase complex (complex I). May be involved in cell proliferation and survival of hormone-dependent tumor cells. May be a regulator of breast tumor cell invasion. In Homo sapiens (Human), this protein is NADH dehydrogenase [ubiquinone] 1 alpha subcomplex assembly factor 4.